Here is a 389-residue protein sequence, read N- to C-terminus: MKIHEYQGKELLRQFNVPVPNGIPAFSVDEAVKAAEKLGGPVWVVKAQIHAGGRGKGGGVKLAKSMDEVKRYASEILGMQLKTHQTGPEGQKVNRLLIEDGADIKKEYYFSIVTDRGTQKNVIMASSEGGMDIEEVAESHPEKIIKVFVDPMVGLTDADCDIIAKGIGVPEASIPMARDVFKNLYKTYWDTDASLVEINPLILEGNGKIKALDAKFNFDPNALFRHPEIVAYRDIDEEDAAEIEASKFDLTYISLDGNIGCLVNGAGLAMATMDAIKLFGGEPANFLDVGGGATAEKVTEAFKIMLKNKNVQAILVNIFGGIMRCDVIADGVVTACKVVNLTVPLVVRMKGTNEELGKKILADSGLPIISTDSMTEAATKVVAAVAKNK.

One can recognise an ATP-grasp domain in the interval 9–244 (KELLRQFNVP…IDEEDAAEIE (236 aa)). ATP-binding positions include K46, 53–55 (GRG), E99, A102, and E107. The Mg(2+) site is built by N199 and D213. Residues N264 and 321–323 (GIM) contribute to the substrate site.

It belongs to the succinate/malate CoA ligase beta subunit family. As to quaternary structure, heterotetramer of two alpha and two beta subunits. It depends on Mg(2+) as a cofactor.

It carries out the reaction succinate + ATP + CoA = succinyl-CoA + ADP + phosphate. The enzyme catalyses GTP + succinate + CoA = succinyl-CoA + GDP + phosphate. Its pathway is carbohydrate metabolism; tricarboxylic acid cycle; succinate from succinyl-CoA (ligase route): step 1/1. Its function is as follows. Succinyl-CoA synthetase functions in the citric acid cycle (TCA), coupling the hydrolysis of succinyl-CoA to the synthesis of either ATP or GTP and thus represents the only step of substrate-level phosphorylation in the TCA. The beta subunit provides nucleotide specificity of the enzyme and binds the substrate succinate, while the binding sites for coenzyme A and phosphate are found in the alpha subunit. The chain is Succinate--CoA ligase [ADP-forming] subunit beta from Polynucleobacter necessarius subsp. necessarius (strain STIR1).